Consider the following 288-residue polypeptide: 33 kDa chaperonin (288 aa).

Intrachain disulfides connect cysteine 236/cysteine 238 and cysteine 269/cysteine 272.

It belongs to the HSP33 family. In terms of processing, under oxidizing conditions two disulfide bonds are formed involving the reactive cysteines. Under reducing conditions zinc is bound to the reactive cysteines and the protein is inactive.

The protein localises to the cytoplasm. Redox regulated molecular chaperone. Protects both thermally unfolding and oxidatively damaged proteins from irreversible aggregation. Plays an important role in the bacterial defense system toward oxidative stress. In Lactococcus lactis subsp. cremoris (strain SK11), this protein is 33 kDa chaperonin.